Consider the following 1256-residue polypeptide: Bifunctional autolysin (1256 aa).

Positions 1 to 29 (MAKKFNYKLPSMVALTLVGSAVTAHQVQA) are cleaved as a signal peptide. A compositionally biased stretch (polar residues) spans 103 to 138 (GDTRANQSATTNNTQPVAKSTSTTAPKTNTNVTNAG). Disordered regions lie at residues 103 to 151 (GDTR…NSEN), 172 to 219 (KTAA…KYKP), and 419 to 440 (TQST…PSTG). Low complexity-rich tracts occupy residues 172-196 (KTAA…KVTT) and 421-439 (STTT…KPST). The segment at 199-775 (ASAQPRSVAA…AVAQPKTAVK (577 aa)) is N-acetylmuramoyl-L-alanine amidase. GW domains are found at residues 443 to 517 (TVAA…YNTA), 519 to 593 (SPVN…DTAK), 612 to 686 (TVSS…YNNA), 688 to 762 (SPVN…VPAA), 784 to 859 (TTQT…VQNL), 861 to 936 (KEVK…APTA), and 943 to 1017 (AAKD…KELI). Residues 776–1256 (AYTVTKPQTT…GKYFDIPQYK (481 aa)) form an endo-beta-N-acetylglucosaminidase region.

In the N-terminal section; belongs to the N-acetylmuramoyl-L-alanine amidase 2 family. It in the C-terminal section; belongs to the glycosyl hydrolase 73 family. As to quaternary structure, oligomer; forms a ring structure at the cell surface which is important for efficient partitioning of daughter cells after cell division. In terms of processing, undergoes proteolytic processing to generate the two extracellular lytic enzymes, probably at the septal region on the cell surface.

Its subcellular location is the secreted. The enzyme catalyses Hydrolyzes the link between N-acetylmuramoyl residues and L-amino acid residues in certain cell-wall glycopeptides.. It carries out the reaction an N(4)-(oligosaccharide-(1-&gt;3)-[oligosaccharide-(1-&gt;6)]-beta-D-Man-(1-&gt;4)-beta-D-GlcNAc-(1-&gt;4)-alpha-D-GlcNAc)-L-asparaginyl-[protein] + H2O = an oligosaccharide-(1-&gt;3)-[oligosaccharide-(1-&gt;6)]-beta-D-Man-(1-&gt;4)-D-GlcNAc + N(4)-(N-acetyl-beta-D-glucosaminyl)-L-asparaginyl-[protein]. Endohydrolysis of the di-N-acetylchitobiosyl unit in high-mannose glycopeptides and glycoproteins containing the -[(Man)5(GlcNAc)2]-Asn structure. One N-acetyl-D-glucosamine residue remains attached to the protein; the rest of the oligosaccharide is released intact. Cleaves the peptidoglycan connecting the daughter cells at the end of the cell division cycle, resulting in the separation of the two newly divided cells. Acts as an autolysin in penicillin-induced lysis. This chain is Bifunctional autolysin (atl), found in Staphylococcus aureus (strain COL).